The chain runs to 208 residues: Small ribosomal subunit protein uS4 (208 aa).

The 64-residue stretch at 98–161 (RRLDNVVYRL…KASPRIKELV (64 aa)) folds into the S4 RNA-binding domain.

The protein belongs to the universal ribosomal protein uS4 family. As to quaternary structure, part of the 30S ribosomal subunit. Contacts protein S5. The interaction surface between S4 and S5 is involved in control of translational fidelity.

Its function is as follows. One of the primary rRNA binding proteins, it binds directly to 16S rRNA where it nucleates assembly of the body of the 30S subunit. In terms of biological role, with S5 and S12 plays an important role in translational accuracy. This chain is Small ribosomal subunit protein uS4, found in Desulforamulus reducens (strain ATCC BAA-1160 / DSM 100696 / MI-1) (Desulfotomaculum reducens).